The chain runs to 273 residues: uncharacterized protein (273 aa).

It belongs to the ycf23 family.

It localises to the plastid. Its subcellular location is the chloroplast. This is an uncharacterized protein from Pyropia yezoensis (Susabi-nori).